We begin with the raw amino-acid sequence, 152 residues long: Nuclear cap-binding protein subunit 2 (152 aa).

MRNA contacts are provided by residues Tyr-8, Tyr-31, 100–104, 111–115, and 121–122; these read RTDWD, RQFGR, and QV. Residues 28–106 enclose the RRM domain; the sequence is TTLYVGNMSF…RIIRTDWDAG (79 aa).

It belongs to the RRM NCBP2 family. Component of the nuclear cap-binding complex (CBC), a heterodimer composed of Cbp80 and Cbp20 that interacts with m7GpppG-capped RNA.

The protein localises to the nucleus. Its function is as follows. Component of the cap-binding complex (CBC), which binds co-transcriptionally to the 5' cap of pre-mRNAs and is involved in various processes such as pre-mRNA splicing and RNA-mediated gene silencing (RNAi). The CBC complex is involved in miRNA-mediated RNA interference and is required for primary microRNAs (miRNAs) processing. Also involved in innate immunity via the short interfering RNAs (siRNAs) processing machinery by restricting the viral RNA production. In the CBC complex, Cbp20 recognizes and binds capped RNAs (m7GpppG-capped RNA) but requires Cbp80 to stabilize the movement of its N-terminal loop and lock the CBC into a high affinity cap-binding state with the cap structure. The chain is Nuclear cap-binding protein subunit 2 (Cbp20) from Ixodes scapularis (Black-legged tick).